The primary structure comprises 89 residues: Small ribosomal subunit protein uS15 (89 aa).

A compositionally biased stretch (basic and acidic residues) spans 1-21 (MSITTEEKARVMKEYGTKDGD). Residues 1-24 (MSITTEEKARVMKEYGTKDGDTGS) are disordered.

Belongs to the universal ribosomal protein uS15 family. As to quaternary structure, part of the 30S ribosomal subunit. Forms a bridge to the 50S subunit in the 70S ribosome, contacting the 23S rRNA.

Functionally, one of the primary rRNA binding proteins, it binds directly to 16S rRNA where it helps nucleate assembly of the platform of the 30S subunit by binding and bridging several RNA helices of the 16S rRNA. Forms an intersubunit bridge (bridge B4) with the 23S rRNA of the 50S subunit in the ribosome. In Ruegeria pomeroyi (strain ATCC 700808 / DSM 15171 / DSS-3) (Silicibacter pomeroyi), this protein is Small ribosomal subunit protein uS15.